The sequence spans 98 residues: Large ribosomal subunit protein uL23 (98 aa).

This sequence belongs to the universal ribosomal protein uL23 family. As to quaternary structure, part of the 50S ribosomal subunit. Contacts protein L29, and trigger factor when it is bound to the ribosome.

In terms of biological role, one of the early assembly proteins it binds 23S rRNA. One of the proteins that surrounds the polypeptide exit tunnel on the outside of the ribosome. Forms the main docking site for trigger factor binding to the ribosome. This Streptococcus gordonii (strain Challis / ATCC 35105 / BCRC 15272 / CH1 / DL1 / V288) protein is Large ribosomal subunit protein uL23.